We begin with the raw amino-acid sequence, 624 residues long: Aliphatic sulfonate oxidoreductase, WOR-like subunit (624 aa).

The tungstopterin site is built by Lys-77, Ser-93, Val-94, Ser-96, His-195, Ala-196, Gly-198, and Tyr-199. Residues Asp-299, Cys-302, and Cys-306 each coordinate [4Fe-4S] cluster. The tungstopterin site is built by Asp-353, Leu-357, Asp-358, Gly-359, Thr-470, Asp-490, Ile-494, Cys-495, and Asn-496. Cys-495 contributes to the [4Fe-4S] cluster binding site. Residues 552–575 (KDDDNPPRFYEPLPSGPVKGKAPN) are disordered.

It belongs to the AOR/FOR family. As to quaternary structure, heterodimer composed of a small WOR5-S subunit, with four [4Fe-4S] clusters, and a large WOR5-L subunit, containing the active site tungsto-bispyranopterin cofactor as well as another [4Fe-4S] cluster. Requires [4Fe-4S] cluster as cofactor. Tungstopterin is required as a cofactor.

It is found in the cytoplasm. It catalyses the reaction an aliphatic sulfonate + 4 oxidized [4Fe-4S]-[ferredoxin] + 2 H2O = 4 reduced [4Fe-4S]-[ferredoxin] + a carboxylate + sulfite + 6 H(+). The enzyme catalyses an aliphatic sulfonate + 2 oxidized [4Fe-4S]-[ferredoxin] + H2O = 2 reduced [4Fe-4S]-[ferredoxin] + an aldehyde + sulfite + 3 H(+). It carries out the reaction 2 oxidized [4Fe-4S]-[ferredoxin] + an aldehyde + H2O = 2 reduced [4Fe-4S]-[ferredoxin] + a carboxylate + 3 H(+). The catalysed reaction is 4 oxidized [4Fe-4S]-[ferredoxin] + taurine + 2 H2O = 4 reduced [4Fe-4S]-[ferredoxin] + sulfite + glycine + 6 H(+). It catalyses the reaction 2 oxidized [4Fe-4S]-[ferredoxin] + taurine + H2O = aminoacetaldehyde + 2 reduced [4Fe-4S]-[ferredoxin] + sulfite + 3 H(+). The enzyme catalyses aminoacetaldehyde + 2 oxidized [4Fe-4S]-[ferredoxin] + H2O = 2 reduced [4Fe-4S]-[ferredoxin] + glycine + 3 H(+). WOR-like catalytic subunit of an oxidoreductase that can desulfonate and oxidize aliphatic sulfonates such as taurine. The activity involves two steps: an oxidative desulfonation reaction, followed by the activation of a second water molecule and oxidation of the resulting aldehyde. May be involved in the oxidation of various aliphatic sulfonates and also phosphonates. In vitro, has a broad substrate specificity with a high affinity for several substituted and nonsubstituted aliphatic and aromatic aldehydes with various chain lengths, with methyl viologen or benzyl viologen as electron acceptor. Ferredoxin is the physiological electron acceptor. The polypeptide is Aliphatic sulfonate oxidoreductase, WOR-like subunit (Pyrococcus furiosus (strain ATCC 43587 / DSM 3638 / JCM 8422 / Vc1)).